A 638-amino-acid chain; its full sequence is Threonine--tRNA ligase (638 aa).

Residues 1-61 enclose the TGS domain; that stretch reads MVAITLPDGK…DRDVNLSIIT (61 aa). Residues 244–536 are catalytic; it reads DHRRLGREME…LIENFAGRFP (293 aa). Positions 336, 387, and 513 each coordinate Zn(2+).

Belongs to the class-II aminoacyl-tRNA synthetase family. In terms of assembly, homodimer. The cofactor is Zn(2+).

It localises to the cytoplasm. The enzyme catalyses tRNA(Thr) + L-threonine + ATP = L-threonyl-tRNA(Thr) + AMP + diphosphate + H(+). Functionally, catalyzes the attachment of threonine to tRNA(Thr) in a two-step reaction: L-threonine is first activated by ATP to form Thr-AMP and then transferred to the acceptor end of tRNA(Thr). Also edits incorrectly charged L-seryl-tRNA(Thr). In Paramagnetospirillum magneticum (strain ATCC 700264 / AMB-1) (Magnetospirillum magneticum), this protein is Threonine--tRNA ligase.